Consider the following 35-residue polypeptide: Bacteriocin lactococcin-G subunit beta (35 aa).

In terms of assembly, bacteriocin activity requires interaction of alpha and beta peptides in a molar ratio of 7:1 or 8:1 respectively.

Functionally, kills Lactococci. This chain is Bacteriocin lactococcin-G subunit beta, found in Lactococcus lactis subsp. lactis (Streptococcus lactis).